Consider the following 262-residue polypeptide: MNPDNDNDSLPLLTLPEQLFLLILNPETGKLPYTFVPLFHGFVGCGIAELQLMDKVIVTKQNSQSFNNNKMLIKVIDHSKTGDTFLDYILSKLSNSFAQKGLQMATAILTISVGLNKMKRITETIAQSLIKKGFIRGTLKRSVLFKNKSIYEVIDYQAKLSVESSICKVLSTPPDYPDNCLRELIILLTFKQYEDFLIKPKLMDSLISRLYHPEQCAHIKANLRLINKNFYKEPSEVHLTNDPSVKMLSLVIGGIRNAITSE.

This sequence belongs to the GOLPH3/VPS74 family.

It is found in the golgi apparatus. The protein resides in the golgi stack membrane. Functionally, phosphatidylinositol-4-phosphate-binding protein that links Golgi membranes to the cytoskeleton and may participate in the tensile force required for vesicle budding from the Golgi. Thereby, may play a role in Golgi membrane trafficking. May also bind to the coatomer to regulate Golgi membrane trafficking. May play a role in anterograde transport from the Golgi to the plasma membrane and regulate secretion. May be involved in vacuolar protein sorting. This is VPS74-like protein DDB_G0288371 from Dictyostelium discoideum (Social amoeba).